A 356-amino-acid polypeptide reads, in one-letter code: Phospho-N-acetylmuramoyl-pentapeptide-transferase (356 aa).

The next 10 membrane-spanning stretches (helical) occupy residues 27-47 (AAVA…ILML), 73-93 (TMGG…WMDL), 97-117 (FVWA…LDDY), 134-154 (LLVE…RTGT), 163-183 (GIVI…IVGF), 195-215 (GLAT…VYLS), 232-252 (AGEL…FLWF), 258-278 (AVFM…TIAV), 285-305 (VLVL…IQVF), and 333-353 (TVVI…LATL).

It belongs to the glycosyltransferase 4 family. MraY subfamily. Mg(2+) serves as cofactor.

It is found in the cell inner membrane. It carries out the reaction UDP-N-acetyl-alpha-D-muramoyl-L-alanyl-gamma-D-glutamyl-meso-2,6-diaminopimeloyl-D-alanyl-D-alanine + di-trans,octa-cis-undecaprenyl phosphate = di-trans,octa-cis-undecaprenyl diphospho-N-acetyl-alpha-D-muramoyl-L-alanyl-D-glutamyl-meso-2,6-diaminopimeloyl-D-alanyl-D-alanine + UMP. The protein operates within cell wall biogenesis; peptidoglycan biosynthesis. In terms of biological role, catalyzes the initial step of the lipid cycle reactions in the biosynthesis of the cell wall peptidoglycan: transfers peptidoglycan precursor phospho-MurNAc-pentapeptide from UDP-MurNAc-pentapeptide onto the lipid carrier undecaprenyl phosphate, yielding undecaprenyl-pyrophosphoryl-MurNAc-pentapeptide, known as lipid I. The chain is Phospho-N-acetylmuramoyl-pentapeptide-transferase from Sphingopyxis alaskensis (strain DSM 13593 / LMG 18877 / RB2256) (Sphingomonas alaskensis).